A 784-amino-acid chain; its full sequence is E3 UFM1-protein ligase 1 homolog (784 aa).

Residues 398–414 (QEVDHGVMEEEKADKRE) are compositionally biased toward basic and acidic residues. The tract at residues 398–472 (QEVDHGVMEE…ASNKKGGKDP (75 aa)) is disordered.

It belongs to the UFL1 family.

Functionally, E3 UFM1-protein ligase that mediates ufmylation of target proteins. This chain is E3 UFM1-protein ligase 1 homolog, found in Anopheles gambiae (African malaria mosquito).